The following is a 208-amino-acid chain: N-hydroxyputrescine acetyltransferase (208 aa).

This sequence belongs to the IucB family.

It carries out the reaction N-hydroxyputrescine + acetyl-CoA = N(1)-acetyl-N(1)-hydroxyputrescine + CoA. The protein operates within siderophore biosynthesis. Functionally, N-acetyltransferase involved in the biosynthesis of fimsbactin A, the major siderophore produced by A.baumannii. Catalyzes the acetylation of N-hydroxyputrescine to form N(1)-acetyl-N(1)-hydroxyputrescine (ahPutr). This is N-hydroxyputrescine acetyltransferase from Acinetobacter baumannii (strain ATCC 17978 / DSM 105126 / CIP 53.77 / LMG 1025 / NCDC KC755 / 5377).